Consider the following 458-residue polypeptide: MLLILPEITLTLIALLGQCFALMIPNKNKIIYNIVILLCIISIFLTFKYSSYEGIWHSFATGINIGISKSIVLLFTIVSLIIYRDYSNLIGEAIKFEFITLILLSIVGIFVAISSRNFLLLFCGMELTALTSYALAGFKLDDIQSSEGALKYFILGSLVTCLSLFGISFIYGFGGSIQFEDILHQLNNNSEIKPGLIIGIVLFLSSIFFKLASSPLHFWIPDVYEGSPISSITYFTSAAKIGMVIVLFNISKLIIGNYYPINYNLIKIIAILSMLFGAFGAIQQTSLKRLMAYSTILNIGYVLIGVILPNQEGYKAALLYILIYAVVSIGFFTCLIMLFGKDVDKASFKTIQGIAETHKTIAALISIVMFSMIGIPPLTGFFGKYYLFYQAINKQEFTLAYCGIFTSVVAAFYYLKVVKAMYFSKKNSIIKLPIQYGLLLINYLVLVFLLFGSFIILF.

Transmembrane regions (helical) follow at residues 2 to 22, 30 to 50, 62 to 82, 93 to 113, 118 to 138, 153 to 173, 196 to 216, 235 to 255, 261 to 281, 290 to 310, 319 to 339, 361 to 381, 397 to 417, and 438 to 458; these read LLIL…CFAL, IIYN…FKYS, GINI…SLII, AIKF…FVAI, FLLL…LAGF, FILG…IYGF, LIIG…SSPL, FTSA…KLII, INYN…AFGA, LMAY…ILPN, LYIL…IMLF, IAAL…LTGF, FTLA…YLKV, and LLLI…IILF.

It belongs to the complex I subunit 2 family. In terms of assembly, NDH-1 is composed of 14 different subunits. Subunits NuoA, H, J, K, L, M, N constitute the membrane sector of the complex.

It is found in the cell inner membrane. The enzyme catalyses a quinone + NADH + 5 H(+)(in) = a quinol + NAD(+) + 4 H(+)(out). NDH-1 shuttles electrons from NADH, via FMN and iron-sulfur (Fe-S) centers, to quinones in the respiratory chain. The immediate electron acceptor for the enzyme in this species is believed to be ubiquinone. Couples the redox reaction to proton translocation (for every two electrons transferred, four hydrogen ions are translocated across the cytoplasmic membrane), and thus conserves the redox energy in a proton gradient. In Rickettsia typhi (strain ATCC VR-144 / Wilmington), this protein is NADH-quinone oxidoreductase subunit N.